The sequence spans 166 residues: NADH-quinone oxidoreductase subunit I (166 aa).

4Fe-4S ferredoxin-type domains follow at residues 57–87 (LRRY…IESE) and 97–126 (TRYD…VTPI). Residues Cys-67, Cys-70, Cys-73, Cys-77, Cys-106, Cys-109, Cys-112, and Cys-116 each contribute to the [4Fe-4S] cluster site.

The protein belongs to the complex I 23 kDa subunit family. As to quaternary structure, NDH-1 is composed of 14 different subunits. Subunits NuoA, H, J, K, L, M, N constitute the membrane sector of the complex. The cofactor is [4Fe-4S] cluster.

Its subcellular location is the cell inner membrane. The catalysed reaction is a quinone + NADH + 5 H(+)(in) = a quinol + NAD(+) + 4 H(+)(out). Functionally, NDH-1 shuttles electrons from NADH, via FMN and iron-sulfur (Fe-S) centers, to quinones in the respiratory chain. The immediate electron acceptor for the enzyme in this species is believed to be ubiquinone. Couples the redox reaction to proton translocation (for every two electrons transferred, four hydrogen ions are translocated across the cytoplasmic membrane), and thus conserves the redox energy in a proton gradient. The chain is NADH-quinone oxidoreductase subunit I from Legionella pneumophila (strain Paris).